A 337-amino-acid polypeptide reads, in one-letter code: Pyridoxal 5'-phosphate synthase subunit PdxS (337 aa).

Aspartate 65 is a binding site for D-ribose 5-phosphate. Catalysis depends on lysine 122, which acts as the Schiff-base intermediate with D-ribose 5-phosphate. Glycine 194 lines the D-ribose 5-phosphate pocket. Residue lysine 206 participates in D-glyceraldehyde 3-phosphate binding. Residues glycine 255 and 276–277 contribute to the D-ribose 5-phosphate site; that span reads GS.

Belongs to the PdxS/SNZ family. In terms of assembly, in the presence of PdxT, forms a dodecamer of heterodimers.

The catalysed reaction is aldehydo-D-ribose 5-phosphate + D-glyceraldehyde 3-phosphate + L-glutamine = pyridoxal 5'-phosphate + L-glutamate + phosphate + 3 H2O + H(+). It functions in the pathway cofactor biosynthesis; pyridoxal 5'-phosphate biosynthesis. Functionally, catalyzes the formation of pyridoxal 5'-phosphate from ribose 5-phosphate (RBP), glyceraldehyde 3-phosphate (G3P) and ammonia. The ammonia is provided by the PdxT subunit. Can also use ribulose 5-phosphate and dihydroxyacetone phosphate as substrates, resulting from enzyme-catalyzed isomerization of RBP and G3P, respectively. The protein is Pyridoxal 5'-phosphate synthase subunit PdxS of Metallosphaera sedula (strain ATCC 51363 / DSM 5348 / JCM 9185 / NBRC 15509 / TH2).